The chain runs to 217 residues: Dense granule protein 1 (217 aa).

The first 19 residues, 1–19 (MARQATFIVALCVCGLAIA), serve as a signal peptide directing secretion. Polar residues predominate over residues 171–183 (VASEDSALGNSEE). The segment at 171-217 (VASEDSALGNSEEQYVEGTVNGSSDPEQERAGGPLIPEGDEQEVDTE) is disordered. N-linked (GlcNAc...) asparagine glycosylation occurs at Asn-191. Positions 208–217 (EGDEQEVDTE) are enriched in acidic residues.

It belongs to the Gra7 family.

The protein localises to the secreted. The chain is Dense granule protein 1 (DG1) from Neospora caninum (Coccidian parasite).